Consider the following 213-residue polypeptide: Adenylate kinase (213 aa).

Residue 10-15 coordinates ATP; it reads GCGKGT. An NMP region spans residues 30-59; that stretch reads STGDLMRKEISLNTRLGLKCQEYMNAGKYV. Residues Thr31, Arg36, 57-59, 83-86, and Gln90 each bind AMP; these read KYV and GYPR. Residues 124–161 form an LID region; that stretch reads NRLVCPLCKASFNLETRKPKQEGLCDFDNTKLVKRSDD. ATP is bound at residue Arg125. Positions 128 and 131 each coordinate Zn(2+). ATP is bound at residue 134-135; that stretch reads SF. 2 residues coordinate Zn(2+): Cys148 and Asp151. Residues Arg158 and Arg169 each coordinate AMP. Residue Asp197 coordinates ATP.

Belongs to the adenylate kinase family. In terms of assembly, monomer.

It is found in the cytoplasm. The catalysed reaction is AMP + ATP = 2 ADP. Its pathway is purine metabolism; AMP biosynthesis via salvage pathway; AMP from ADP: step 1/1. Its function is as follows. Catalyzes the reversible transfer of the terminal phosphate group between ATP and AMP. Plays an important role in cellular energy homeostasis and in adenine nucleotide metabolism. This Mycoplasma mycoides subsp. mycoides SC (strain CCUG 32753 / NCTC 10114 / PG1) protein is Adenylate kinase.